An 82-amino-acid polypeptide reads, in one-letter code: uncharacterized protein (82 aa).

A run of 2 helical transmembrane segments spans residues L29–I49 and W55–F75.

The protein localises to the cell membrane. This is an uncharacterized protein from Escherichia coli (strain K12).